We begin with the raw amino-acid sequence, 909 residues long: Villin-1 (909 aa).

Gelsolin-like repeat units follow at residues Lys-29 to Ile-79, Val-149 to Ala-189, Gly-262 to Lys-305, Leu-391 to Ala-448, Met-529 to Glu-569, and Leu-631 to Glu-672. 2 disordered regions span residues Ser-733–Glu-781 and Asp-816–Arg-835. Over residues Gln-752 to Gln-762 the composition is skewed to basic and acidic residues. A Phosphoserine modification is found at Ser-780. Residues Ser-844–Phe-909 enclose the HP domain.

Belongs to the villin/gelsolin family. In terms of tissue distribution, expressed in all tissues examined. Mainly detected in the vascular tissue and the pericycle of roots and in the vasculature of leaves. Not expressed in the root cap.

It localises to the cytoplasm. Its subcellular location is the cytoskeleton. Binds actin and actin filament bundles in a Ca(2+)/calmodulin-insensitive manner, but is unable to sever, cap, and nucleate actin filament formation in vitro. Does not protect individual filaments from severing by VLN3 (AC O81645). This chain is Villin-1, found in Arabidopsis thaliana (Mouse-ear cress).